A 383-amino-acid polypeptide reads, in one-letter code: MHC class I polypeptide-related sequence A (383 aa).

The N-terminal stretch at 1 to 23 (MGLGPVFLLLAGIFPFAPPGAAA) is a signal peptide. At 24 to 307 (EPHSLRYNLT…GKVLVLQSHW (284 aa)) the chain is on the extracellular side. N-linked (GlcNAc...) asparagine glycosylation is present at Asn-31. Cys-59 and Cys-64 are joined by a disulfide. Asn-79 carries an N-linked (GlcNAc...) asparagine glycan. Cys-119 and Cys-187 are joined by a disulfide. The Ig-like C1-type domain maps to 207-296 (PMVNVTRSEA…SGNHSTHPVP (90 aa)). Asn-210, Asn-220, and Asn-261 each carry an N-linked (GlcNAc...) asparagine glycan. The cysteines at positions 225 and 282 are disulfide-linked. A helical transmembrane segment spans residues 308–328 (QTFHVSAVAAAAIFVIIIFYV). Residues 329-383 (RCCKKKTSAAEGPELVSLQVLDQHPVGTSDHRDATQLGFQPLMSDLGSTGSTEGA) lie on the Cytoplasmic side of the membrane. 2 S-palmitoyl cysteine lipidation sites follow: Cys-330 and Cys-331.

It belongs to the MHC class I family. MIC subfamily. In terms of assembly, unlike classical MHC class I molecules, does not form a heterodimer with beta-2-microglobulin. Binds as a monomer to a KLRK1/NKG2D homodimer. KLRK1 forms a complex with HCST/DAP10 in which KLRK1 binds MICA while HCST acts as an adapter molecule which enables signal transduction. Interacts with PDIA6 on the surface of tumor cells, leading to disulfide bond reduction which is required for release of MICA from tumor cells. (Microbial infection) Interacts with human cytomegalovirus/HHV-5 protein UL142. Post-translationally, N-glycosylated. Glycosylation is not essential for interaction with KLRK1/NKG2D but enhances complex formation. Proteolytically cleaved and released from the cell surface of tumor cells which impairs KLRK1/NKG2D expression and T-cell activation. In terms of processing, palmitoylated on cysteine residues in the cytoplasmic tail leading to its association with membrane microdomains enriched in cholesterol. Post-translationally, N-glycosylation is necessary for cell surface expression. (Microbial infection) Ubiquitinated by human herpesvirus 8 protein K5, leading to degradation. Widely expressed with the exception of the central nervous system where it is absent. Expressed predominantly in gastric epithelium and also in monocytes, keratinocytes, endothelial cells, fibroblasts and in the outer layer of Hassal's corpuscles within the medulla of normal thymus. In skin, expressed mainly in the keratin layers, basal cells, ducts and follicles. Also expressed in many, but not all, epithelial tumors of lung, breast, kidney, ovary, prostate and colon. In thyomas, overexpressed in cortical and medullar epithelial cells. Tumors expressing MICA display increased levels of gamma delta T-cells.

Its subcellular location is the cell membrane. It localises to the cytoplasm. Functionally, widely expressed membrane-bound protein which acts as a ligand to stimulate an activating receptor KLRK1/NKG2D, expressed on the surface of essentially all human natural killer (NK), gammadelta T and CD8 alphabeta T-cells. Up-regulated in stressed conditions, such as viral and bacterial infections or DNA damage response, serves as signal of cellular stress, and engagement of KLRK1/NKG2D by MICA triggers NK-cells resulting in a range of immune effector functions, such as cytotoxicity and cytokine production. The protein is MHC class I polypeptide-related sequence A of Homo sapiens (Human).